The following is a 426-amino-acid chain: Anhydromevalonate phosphate decarboxylase (426 aa).

Mn(2+) contacts are provided by Asn148 and Glu211. Asp255 serves as the catalytic Proton acceptor.

The protein belongs to the UbiD family. Requires prenylated FMN as cofactor. The cofactor is Mn(2+).

It carries out the reaction (2E)-3-methyl-5-phosphooxypent-2-enoate + H(+) = isopentenyl phosphate + CO2. Its pathway is isoprenoid biosynthesis; isopentenyl diphosphate biosynthesis via mevalonate pathway. Catalyzes the conversion of trans-anhydromevalonate 5-phosphate (tAHMP) into isopentenyl phosphate. Involved in the archaeal mevalonate (MVA) pathway, which provides fundamental precursors for isoprenoid biosynthesis, such as isopentenyl diphosphate (IPP) and dimethylallyl diphosphate (DMAPP). This Archaeoglobus fulgidus (strain ATCC 49558 / DSM 4304 / JCM 9628 / NBRC 100126 / VC-16) protein is Anhydromevalonate phosphate decarboxylase.